The sequence spans 579 residues: Isocitrate dehydrogenase kinase/phosphatase (579 aa).

Residues 324–330 (ADGTPGM) and Lys-345 contribute to the ATP site. Asp-380 is an active-site residue.

The protein belongs to the AceK family.

The protein localises to the cytoplasm. The enzyme catalyses L-seryl-[isocitrate dehydrogenase] + ATP = O-phospho-L-seryl-[isocitrate dehydrogenase] + ADP + H(+). In terms of biological role, bifunctional enzyme which can phosphorylate or dephosphorylate isocitrate dehydrogenase (IDH) on a specific serine residue. This is a regulatory mechanism which enables bacteria to bypass the Krebs cycle via the glyoxylate shunt in response to the source of carbon. When bacteria are grown on glucose, IDH is fully active and unphosphorylated, but when grown on acetate or ethanol, the activity of IDH declines drastically concomitant with its phosphorylation. In Xanthomonas campestris pv. campestris (strain 8004), this protein is Isocitrate dehydrogenase kinase/phosphatase.